A 531-amino-acid chain; its full sequence is Putative aldehyde dehydrogenase family 7 member A1 homolog (531 aa).

Residue 264 to 269 participates in NAD(+) binding; that stretch reads GSSEIG. Glu-286 serves as the catalytic Proton acceptor. Residue Cys-320 is the Nucleophile of the active site.

The protein belongs to the aldehyde dehydrogenase family. As to quaternary structure, homotetramer.

The catalysed reaction is an aldehyde + NAD(+) + H2O = a carboxylate + NADH + 2 H(+). This is Putative aldehyde dehydrogenase family 7 member A1 homolog (alh-9) from Caenorhabditis elegans.